Reading from the N-terminus, the 845-residue chain is uncharacterized protein (845 aa).

Polar residues predominate over residues 224–241 (SNNIPTGIQDSSKYTVNG). Disordered stretches follow at residues 224 to 244 (SNNIPTGIQDSSKYTVNGPTE), 324 to 346 (QGTESISFASKNNSAPSADANNG), 383 to 434 (RTAN…EGSA), 456 to 485 (VKASNISTEKSKTIAKPKPAKELSPQATLN), 519 to 619 (NMTL…PKNS), 674 to 701 (VVSRTVTSPKSGAYASPSKASYNQDSSP), and 739 to 785 (RKST…ANKS). The segment covering 390-399 (PTKKSNRSEQ) has biased composition (basic and acidic residues). Polar residues predominate over residues 400-422 (SKTVANTNVGSKNGTTPRSFAQK). Residues 534–546 (NSWRSKYLSEGKN) are compositionally biased toward basic and acidic residues. Residues 563-576 (SSLASPTKSSASPL) show a composition bias toward low complexity. S567 carries the post-translational modification Phosphoserine. 2 stretches are compositionally biased toward basic and acidic residues: residues 579-588 (APKETPERLC) and 600-614 (ANLKESELPKEKSDI). 3 stretches are compositionally biased toward polar residues: residues 674-683 (VVSRTVTSPK), 691-701 (SKASYNQDSSP), and 743-760 (ADSLSSPKRQSVPSTPKA).

The protein localises to the mitochondrion. This is an uncharacterized protein from Schizosaccharomyces pombe (strain 972 / ATCC 24843) (Fission yeast).